The sequence spans 220 residues: MFNNITDDDRGQVGIGTLIVFIAMVLVAAIAAGVLVNTAGFLQATAEDAGEQSVNKVTNRVEVLNTHGTVGGEEDIDNITLTVRLAAGSDAVDMNETSIKYLSGDSVVTLTNQTVTSGANSATNDSAEGVADSDEFGLSEVTDDDGSFGVLNSMNDRYEVTIDTAAIETSDGDNTNLIGGLSTGEQVTLEITSRTGGTTQVILTMPQQLAGKTQNEPVEL.

Positions 1 to 11 are excised as a propeptide; the sequence is MFNNITDDDRG. 4 N-linked (GlcNAc...) asparagine glycosylation sites follow: Asn78, Asn95, Asn112, and Asn124.

This sequence belongs to the archaeal flagellin family. Post-translationally, glycosylated by a pentasaccharide similar to the S-layer glycoprotein, probably comprising a hexose, 2 hexuronic acids, a methyl ester of a hexuronic acid and mannose.

It localises to the archaeal flagellum. Its function is as follows. Flagellin that plays both structural and regulatory roles in flagella biosynthesis. Does not constitute a major flagellin in terms of abundance contrary to FlgA1: may regulate the flagella-dependent swimming motility depending on the relative abundance of FlgA1. Not involved in PibD-dependent surface adhesion. This Haloferax volcanii (strain ATCC 29605 / DSM 3757 / JCM 8879 / NBRC 14742 / NCIMB 2012 / VKM B-1768 / DS2) (Halobacterium volcanii) protein is Flagellin A2 (flgA2).